Reading from the N-terminus, the 299-residue chain is Circadian clock oscillator protein KaiA (299 aa).

Positions Met-1–Pro-135 are psR domain, binds oxidized quinones. The region spanning Met-1–Leu-169 is the KaiA N-terminal domain. The segment at Gly-170–Arg-178 is flexible linker. In terms of domain architecture, KaiA C-terminal spans Lys-179 to Arg-287.

The protein belongs to the KaiA family. Homodimer. The KaiABC1 complex composition changes during the circadian cycle to control KaiC1 phosphorylation. Complexes KaiC1(6), KaiA(2-4):KaiC1(6), KaiB(6):KaiC1(6) and KaiC1(6):KaiB(6):KaiA(12) are among the most important forms, many form cooperatively. KaiA and CikA bind to the same region of the KaiB(fs) form and therefore compete. Interacts with KaiC1 but not KaiC2 or KaiC3. Interacts with itself, not seen to interact with other Kai proteins.

Functionally, key component of the KaiABC oscillator complex, which constitutes the main circadian regulator in cyanobacteria. Complex composition changes during the circadian cycle to control KaiC phosphorylation. KaiA stimulates KaiC autophosphorylation, while KaiB sequesters KaiA, leading to KaiC autodephosphorylation. KaiA binding to the KaiC CII domain during the subjective day yields KaiA(2-4):KaiC(6) complexes which stimulate KaiC autophosphorylation. Phospho-Ser-431 KaiC accumulation triggers binding of KaiB during the subjective night to form the KaiB(6):KaiC(6) complex, leading to changes in the output regulators CikA and SasA. KaiB(6):KaiC(6) formation exposes a site for KaiA binding on KaiB that sequesters KaiA from KaiC's CII domain, making the KaiC(6):KaiB(6):KaiA(12) complex resulting in KaiC autodephosphorylation. Complete dephosphorylation of KaiC leads to dissociation of KaiA(2):KaiB(1), completing 1 cycle of the Kai oscillator. In terms of biological role, component of the oscillator and circadian clock in this organism, enhances fitness in a rhythmic environment. Stimulates KaiC1 to autophosphorylate, has no effect on the kinase activity of KaiC2 or KaiC3. Binds oxidized quinones via the N-terminal PsR domain, allowing it to sense redox changes and possibly mediate clock input. The chain is Circadian clock oscillator protein KaiA from Synechocystis sp. (strain ATCC 27184 / PCC 6803 / Kazusa).